The sequence spans 282 residues: ATP synthase gamma chain (282 aa).

This sequence belongs to the ATPase gamma chain family. In terms of assembly, F-type ATPases have 2 components, CF(1) - the catalytic core - and CF(0) - the membrane proton channel. CF(1) has five subunits: alpha(3), beta(3), gamma(1), delta(1), epsilon(1). CF(0) has three main subunits: a, b and c.

Its subcellular location is the cell membrane. Its function is as follows. Produces ATP from ADP in the presence of a proton gradient across the membrane. The gamma chain is believed to be important in regulating ATPase activity and the flow of protons through the CF(0) complex. This chain is ATP synthase gamma chain, found in Clostridium botulinum (strain Loch Maree / Type A3).